The sequence spans 320 residues: 1,5-anhydro-D-fructose reductase (320 aa).

Aspartate 35 is an NADP(+) binding site. The Proton donor role is filled by tyrosine 40. Histidine 102 serves as a coordination point for substrate. NADP(+) contacts are provided by residues glutamine 194 and 265–277 (IPGSITPSHIKEN).

It belongs to the aldo/keto reductase family. In terms of assembly, monomer. As to expression, specifically expressed in testis. Expressed in testicular germ cells and testis interstitial cells.

It is found in the cytoplasm. The catalysed reaction is 1,5-anhydro-D-glucitol + NADP(+) = 1,5-anhydro-D-fructose + NADPH + H(+). With respect to regulation, inhibited by p-chloromercuribenzoic acid and alkyliodines. In terms of biological role, catalyzes the NADPH-dependent reduction of 1,5-anhydro-D-fructose (AF) to 1,5-anhydro-D-glucitol. Has low NADPH-dependent reductase activity towards 9,10-phenanthrenequinone (in vitro). The protein is 1,5-anhydro-D-fructose reductase (AKR1E2) of Homo sapiens (Human).